Reading from the N-terminus, the 154-residue chain is Large ribosomal subunit protein uL23y (154 aa).

The protein belongs to the universal ribosomal protein uL23 family.

In terms of biological role, binds to a specific region on the 26S rRNA. This chain is Large ribosomal subunit protein uL23y (RPL23AB), found in Arabidopsis thaliana (Mouse-ear cress).